Reading from the N-terminus, the 413-residue chain is Probable tRNA sulfurtransferase (413 aa).

In terms of domain architecture, THUMP spans 61-171 (TRVLDRVTRV…EDGTYIFTEK (111 aa)). ATP is bound by residues 189 to 190 (ML), 214 to 215 (HF), arginine 275, glycine 297, and glutamine 306.

The protein belongs to the ThiI family.

It localises to the cytoplasm. The enzyme catalyses [ThiI sulfur-carrier protein]-S-sulfanyl-L-cysteine + a uridine in tRNA + 2 reduced [2Fe-2S]-[ferredoxin] + ATP + H(+) = [ThiI sulfur-carrier protein]-L-cysteine + a 4-thiouridine in tRNA + 2 oxidized [2Fe-2S]-[ferredoxin] + AMP + diphosphate. It carries out the reaction [ThiS sulfur-carrier protein]-C-terminal Gly-Gly-AMP + S-sulfanyl-L-cysteinyl-[cysteine desulfurase] + AH2 = [ThiS sulfur-carrier protein]-C-terminal-Gly-aminoethanethioate + L-cysteinyl-[cysteine desulfurase] + A + AMP + 2 H(+). Its pathway is cofactor biosynthesis; thiamine diphosphate biosynthesis. In terms of biological role, catalyzes the ATP-dependent transfer of a sulfur to tRNA to produce 4-thiouridine in position 8 of tRNAs, which functions as a near-UV photosensor. Also catalyzes the transfer of sulfur to the sulfur carrier protein ThiS, forming ThiS-thiocarboxylate. This is a step in the synthesis of thiazole, in the thiamine biosynthesis pathway. The sulfur is donated as persulfide by IscS. The chain is Probable tRNA sulfurtransferase from Natranaerobius thermophilus (strain ATCC BAA-1301 / DSM 18059 / JW/NM-WN-LF).